The sequence spans 406 residues: 3-phosphoshikimate 1-carboxyvinyltransferase (406 aa).

Residues K20, S21, and R25 each coordinate 3-phosphoshikimate. K20 lines the phosphoenolpyruvate pocket. Positions 84 and 112 each coordinate phosphoenolpyruvate. 3-phosphoshikimate is bound by residues S155, S156, Q157, D295, Q317, and K321. Q157 lines the phosphoenolpyruvate pocket. The Proton acceptor role is filled by D295. Phosphoenolpyruvate contacts are provided by R325, R366, and K392.

It belongs to the EPSP synthase family. In terms of assembly, monomer.

The protein resides in the cytoplasm. It carries out the reaction 3-phosphoshikimate + phosphoenolpyruvate = 5-O-(1-carboxyvinyl)-3-phosphoshikimate + phosphate. The protein operates within metabolic intermediate biosynthesis; chorismate biosynthesis. Catalyzes the transfer of the enolpyruvyl moiety of phosphoenolpyruvate (PEP) to the 5-hydroxyl of shikimate-3-phosphate (S3P) to produce enolpyruvyl shikimate-3-phosphate and inorganic phosphate. The sequence is that of 3-phosphoshikimate 1-carboxyvinyltransferase from Pyrococcus furiosus (strain ATCC 43587 / DSM 3638 / JCM 8422 / Vc1).